A 36-amino-acid chain; its full sequence is Allergen Act d 3 (36 aa).

Post-translationally, N-glycosylated.

The protein is Allergen Act d 3 of Actinidia deliciosa (Kiwi).